A 213-amino-acid polypeptide reads, in one-letter code: Maleamate amidohydrolase (213 aa).

C154 serves as the catalytic Nucleophile.

It belongs to the isochorismatase family.

The catalysed reaction is maleamate + H2O = maleate + NH4(+). It functions in the pathway cofactor degradation; nicotinate degradation. In terms of biological role, maleamate amidase that transforms maleamate into maleate and ammonia in the aerobic nicotinate degradation pathway. The protein is Maleamate amidohydrolase (nicF) of Pseudomonas putida (strain ATCC 47054 / DSM 6125 / CFBP 8728 / NCIMB 11950 / KT2440).